A 293-amino-acid chain; its full sequence is Large ribosomal subunit protein uL4 (293 aa).

Composition is skewed to basic and acidic residues over residues 1 to 14 (MAEE…EKTP) and 33 to 55 (KTTE…ESTK). Disordered regions lie at residues 1-72 (MAEE…IKSE) and 130-166 (QRQG…STRS).

This sequence belongs to the universal ribosomal protein uL4 family. In terms of assembly, part of the 50S ribosomal subunit.

In terms of biological role, one of the primary rRNA binding proteins, this protein initially binds near the 5'-end of the 23S rRNA. It is important during the early stages of 50S assembly. It makes multiple contacts with different domains of the 23S rRNA in the assembled 50S subunit and ribosome. Its function is as follows. Forms part of the polypeptide exit tunnel. The chain is Large ribosomal subunit protein uL4 from Mycoplasma mobile (strain ATCC 43663 / 163K / NCTC 11711) (Mesomycoplasma mobile).